The primary structure comprises 186 residues: ATP-dependent protease subunit HslV (186 aa).

Threonine 14 is a catalytic residue. The Na(+) site is built by alanine 168, cysteine 171, and threonine 174.

Belongs to the peptidase T1B family. HslV subfamily. A double ring-shaped homohexamer of HslV is capped on each side by a ring-shaped HslU homohexamer. The assembly of the HslU/HslV complex is dependent on binding of ATP.

Its subcellular location is the cytoplasm. The catalysed reaction is ATP-dependent cleavage of peptide bonds with broad specificity.. With respect to regulation, allosterically activated by HslU binding. In terms of biological role, protease subunit of a proteasome-like degradation complex believed to be a general protein degrading machinery. The sequence is that of ATP-dependent protease subunit HslV from Bradyrhizobium sp. (strain ORS 278).